The chain runs to 957 residues: Glycine dehydrogenase (decarboxylating) (957 aa).

The residue at position 708 (lysine 708) is an N6-(pyridoxal phosphate)lysine.

It belongs to the GcvP family. The glycine cleavage system is composed of four proteins: P, T, L and H. Pyridoxal 5'-phosphate serves as cofactor.

It catalyses the reaction N(6)-[(R)-lipoyl]-L-lysyl-[glycine-cleavage complex H protein] + glycine + H(+) = N(6)-[(R)-S(8)-aminomethyldihydrolipoyl]-L-lysyl-[glycine-cleavage complex H protein] + CO2. Its function is as follows. The glycine cleavage system catalyzes the degradation of glycine. The P protein binds the alpha-amino group of glycine through its pyridoxal phosphate cofactor; CO(2) is released and the remaining methylamine moiety is then transferred to the lipoamide cofactor of the H protein. In Escherichia coli (strain ATCC 8739 / DSM 1576 / NBRC 3972 / NCIMB 8545 / WDCM 00012 / Crooks), this protein is Glycine dehydrogenase (decarboxylating).